A 469-amino-acid polypeptide reads, in one-letter code: Ubiquitin carboxyl-terminal hydrolase MINDY-1 (469 aa).

Residues 1 to 85 (MEYHQPEDPA…APPGPTLGTL (85 aa)) form a disordered region. Residues 23 to 53 (ENHEVLAGPDEHPQDTDARDADGEAREREPA) show a composition bias toward basic and acidic residues. Over residues 66-76 (LESPLPEASSA) the composition is skewed to low complexity. The residue at position 103 (S103) is a Phosphoserine. C137 acts as the Nucleophile in catalysis. The active-site Proton acceptor is the H319. The interval 388-426 (QVDQDYLIALSLQQQQPRGPLGLTDLELAQQLQQEEYQQ) is ubiquitin-binding domain (UBD). A Phosphoserine modification is found at S441. The disordered stretch occupies residues 441-469 (SLQGRGATSGRPAGERRQRPKHESDCILL). The segment covering 453–469 (AGERRQRPKHESDCILL) has biased composition (basic and acidic residues).

Belongs to the MINDY deubiquitinase family. FAM63 subfamily.

The enzyme catalyses Thiol-dependent hydrolysis of ester, thioester, amide, peptide and isopeptide bonds formed by the C-terminal Gly of ubiquitin (a 76-residue protein attached to proteins as an intracellular targeting signal).. In terms of biological role, hydrolase that can specifically remove 'Lys-48'-linked conjugated ubiquitin from proteins. Has exodeubiquitinase activity and has a preference for long polyubiquitin chains. May play a regulatory role at the level of protein turnover. The sequence is that of Ubiquitin carboxyl-terminal hydrolase MINDY-1 from Homo sapiens (Human).